A 772-amino-acid chain; its full sequence is Calcium-binding mitochondrial carrier protein (772 aa).

An N-terminal domain region spans residues 1–377 (MFANRVRQAQ…SISDFEKSTG (377 aa)). EF-hand domains lie at 132–165 (LDAD…ELMA), 166–201 (KPEA…SLDP), 235–270 (LQQE…VKLR), and 347–382 (ITPL…NINK). The Ca(2+) site is built by D145, D147, T149, Y151, E156, D179, D181, N183, Y185, and D190. D360, N362, D364, K366, and D371 together coordinate Ca(2+). The segment at 378 to 422 (LNINKIGGGTNYSDSYPSDSHVTIQNSSTTPSPSTPITNTAAAIA) is linker loop domain. The interval 432–720 (AQQVLESIEN…KALLPDAEYK (289 aa)) is carrier domain. Solcar repeat units follow at residues 436–526 (LESI…LRDL), 535–616 (IYFP…MKTI), and 624–712 (LGPM…LQKA). The next 6 membrane-spanning stretches (helical) occupy residues 442–459 (FALG…VYPI), 501–520 (GILP…LTVN), 545–558 (GFAG…TNPL), 591–610 (GAGA…FPTY), 630–647 (LLAG…VTPA), and 687–706 (GALA…LVSY). The segment at 721–772 (PPTNAPITQKDFDVIRGNTNTVQRVIDMESKFGTLHQTRDNNKSSNGGENKN) is C-terminal domain. The disordered stretch occupies residues 751–772 (KFGTLHQTRDNNKSSNGGENKN). Over residues 763-772 (KSSNGGENKN) the composition is skewed to low complexity.

The protein belongs to the mitochondrial carrier (TC 2.A.29) family. As to quaternary structure, homodimer (via N-terminus).

The protein resides in the mitochondrion inner membrane. Mitochondrial and calcium-binding carrier that catalyzes the calcium-dependent exchange of cytoplasmic glutamate with mitochondrial aspartate across the mitochondrial inner membrane. The polypeptide is Calcium-binding mitochondrial carrier protein (mcfO) (Dictyostelium discoideum (Social amoeba)).